An 81-amino-acid chain; its full sequence is Cytotoxin 3b (81 aa).

Positions 1 to 21 (MKTLLLTLVVVTIVCLDLGYT) are cleaved as a signal peptide. 4 cysteine pairs are disulfide-bonded: cysteine 24–cysteine 42, cysteine 35–cysteine 59, cysteine 63–cysteine 74, and cysteine 75–cysteine 80.

It belongs to the three-finger toxin family. Short-chain subfamily. Type IA cytotoxin sub-subfamily. As to quaternary structure, monomer in solution; Homodimer and oligomer in the presence of negatively charged lipids forming a pore with a size ranging between 20 and 30 Angstroms. Expressed by the venom gland.

It localises to the secreted. The protein localises to the target cell membrane. In terms of biological role, shows cytolytic activity on many different cells by forming pore in lipid membranes. In vivo, increases heart rate or kills the animal by cardiac arrest. In addition, it binds to heparin with high affinity, interacts with Kv channel-interacting protein 1 (KCNIP1) in a calcium-independent manner, and binds to integrin alpha-V/beta-3 (ITGAV/ITGB3) with moderate affinity. The sequence is that of Cytotoxin 3b from Naja atra (Chinese cobra).